We begin with the raw amino-acid sequence, 74 residues long: ATP synthase subunit c (74 aa).

2 helical membrane-spanning segments follow: residues 8-28 (FIGAGLAAIGMIGSGIGVGNI) and 52-72 (IGFAVTEAIALFALVVALMVL).

It belongs to the ATPase C chain family. As to quaternary structure, F-type ATPases have 2 components, F(1) - the catalytic core - and F(0) - the membrane proton channel. F(1) has five subunits: alpha(3), beta(3), gamma(1), delta(1), epsilon(1). F(0) has three main subunits: a(1), b(2) and c(10-14). The alpha and beta chains form an alternating ring which encloses part of the gamma chain. F(1) is attached to F(0) by a central stalk formed by the gamma and epsilon chains, while a peripheral stalk is formed by the delta and b chains.

Its subcellular location is the cell inner membrane. F(1)F(0) ATP synthase produces ATP from ADP in the presence of a proton or sodium gradient. F-type ATPases consist of two structural domains, F(1) containing the extramembraneous catalytic core and F(0) containing the membrane proton channel, linked together by a central stalk and a peripheral stalk. During catalysis, ATP synthesis in the catalytic domain of F(1) is coupled via a rotary mechanism of the central stalk subunits to proton translocation. Its function is as follows. Key component of the F(0) channel; it plays a direct role in translocation across the membrane. A homomeric c-ring of between 10-14 subunits forms the central stalk rotor element with the F(1) delta and epsilon subunits. The sequence is that of ATP synthase subunit c from Paramagnetospirillum magneticum (strain ATCC 700264 / AMB-1) (Magnetospirillum magneticum).